A 254-amino-acid chain; its full sequence is Proteasome subunit alpha (254 aa).

A disordered region spans residues 232–254 (PEVDSSESSNEAEAGAEKGSGES).

The protein belongs to the peptidase T1A family. The 20S proteasome core is composed of 14 alpha and 14 beta subunits that assemble into four stacked heptameric rings, resulting in a barrel-shaped structure. The two inner rings, each composed of seven catalytic beta subunits, are sandwiched by two outer rings, each composed of seven alpha subunits. The catalytic chamber with the active sites is on the inside of the barrel. Has a gated structure, the ends of the cylinder being occluded by the N-termini of the alpha-subunits. Is capped by the proteasome-associated ATPase, ARC.

The protein localises to the cytoplasm. Its pathway is protein degradation; proteasomal Pup-dependent pathway. The formation of the proteasomal ATPase ARC-20S proteasome complex, likely via the docking of the C-termini of ARC into the intersubunit pockets in the alpha-rings, may trigger opening of the gate for substrate entry. Interconversion between the open-gate and close-gate conformations leads to a dynamic regulation of the 20S proteasome proteolysis activity. In terms of biological role, component of the proteasome core, a large protease complex with broad specificity involved in protein degradation. This Mycolicibacterium vanbaalenii (strain DSM 7251 / JCM 13017 / BCRC 16820 / KCTC 9966 / NRRL B-24157 / PYR-1) (Mycobacterium vanbaalenii) protein is Proteasome subunit alpha.